A 1001-amino-acid polypeptide reads, in one-letter code: DNA topoisomerase 3-alpha (1001 aa).

The region spanning 35-179 (KVLCVAEKND…NLQVLRARFS (145 aa)) is the Toprim domain. One can recognise a Topo IA-type catalytic domain in the interval 197-617 (DQRVSDAVDV…QQVQKYKQVF (421 aa)). Catalysis depends on tyrosine 362, which acts as the O-(5'-phospho-DNA)-tyrosine intermediate. Residues 400-424 (GGPTPRNGNKSDQAHPPIHPTKYTN) form a disordered region. The segment at 658-685 (CPQCNKDMVLKTKKNGGFYLSCMGFPEC) adopts a C4-type zinc-finger fold. Residues 774-792 (RMDNSQHPQPADSRQTGSS) are compositionally biased toward polar residues. Residues 774–810 (RMDNSQHPQPADSRQTGSSKALAQTLPPPTAAGESNS) form a disordered region. Zn(2+) is bound by residues cysteine 813, cysteine 815, cysteine 838, cysteine 843, cysteine 897, cysteine 899, cysteine 922, and cysteine 930. 2 consecutive GRF-type zinc fingers follow at residues 813 to 852 (CNCG…ADSP) and 897 to 939 (CLCS…VDEN). Residues 937-1001 (DENTAPGTSG…HTRPFCPQNR (65 aa)) are disordered. Positions 953–964 (DRGRTLESEARS) are enriched in basic and acidic residues.

The protein belongs to the type IA topoisomerase family. As to quaternary structure, binds ssDNA. Interacts (via N-terminal region) with BLM; the interaction is direct. Directly interacts with RMI1. Component of the RMI complex, containing at least TOP3A, RMI1 and RMI2. The RMI complex interacts with BLM. It depends on Mg(2+) as a cofactor. High expression is found in testis, heart, skeletal muscle and pancreas.

It is found in the mitochondrion matrix. The catalysed reaction is ATP-independent breakage of single-stranded DNA, followed by passage and rejoining.. Functionally, releases the supercoiling and torsional tension of DNA introduced during the DNA replication and transcription by transiently cleaving and rejoining one strand of the DNA duplex. Introduces a single-strand break via transesterification at a target site in duplex DNA. The scissile phosphodiester is attacked by the catalytic tyrosine of the enzyme, resulting in the formation of a DNA-(5'-phosphotyrosyl)-enzyme intermediate and the expulsion of a 3'-OH DNA strand. The free DNA strand then undergoes passage around the unbroken strand thus removing DNA supercoils. Finally, in the religation step, the DNA 3'-OH attacks the covalent intermediate to expel the active-site tyrosine and restore the DNA phosphodiester backbone. As an essential component of the RMI complex it is involved in chromosome separation and the processing of homologous recombination intermediates to limit DNA crossover formation in cells. Has DNA decatenation activity. It is required for mtDNA decatenation and segregation after completion of replication, in a process that does not require BLM, RMI1 and RMI2. The sequence is that of DNA topoisomerase 3-alpha (TOP3A) from Homo sapiens (Human).